The following is a 963-amino-acid chain: Protein translocase subunit SecA (963 aa).

ATP contacts are provided by residues Gln-87, 105 to 109 (GEGKT), and Asp-524. Positions 946, 948, 957, and 958 each coordinate Zn(2+).

This sequence belongs to the SecA family. In terms of assembly, monomer and homodimer. Part of the essential Sec protein translocation apparatus which comprises SecA, SecYEG and auxiliary proteins SecDF-YajC and YidC. Zn(2+) serves as cofactor.

It is found in the cell inner membrane. Its subcellular location is the cytoplasm. It catalyses the reaction ATP + H2O + cellular proteinSide 1 = ADP + phosphate + cellular proteinSide 2.. Its function is as follows. Part of the Sec protein translocase complex. Interacts with the SecYEG preprotein conducting channel. Has a central role in coupling the hydrolysis of ATP to the transfer of proteins into and across the cell membrane, serving both as a receptor for the preprotein-SecB complex and as an ATP-driven molecular motor driving the stepwise translocation of polypeptide chains across the membrane. This chain is Protein translocase subunit SecA, found in Methylobacterium radiotolerans (strain ATCC 27329 / DSM 1819 / JCM 2831 / NBRC 15690 / NCIMB 10815 / 0-1).